A 150-amino-acid chain; its full sequence is Transcription antitermination protein NusB (150 aa).

This sequence belongs to the NusB family.

Its function is as follows. Involved in transcription antitermination. Required for transcription of ribosomal RNA (rRNA) genes. Binds specifically to the boxA antiterminator sequence of the ribosomal RNA (rrn) operons. This is Transcription antitermination protein NusB from Streptococcus pyogenes serotype M3 (strain ATCC BAA-595 / MGAS315).